The sequence spans 350 residues: GDSL esterase/lipase At2g42990 (350 aa).

The signal sequence occupies residues M1 to A24. Residue S35 is the Nucleophile of the active site. 3 N-linked (GlcNAc...) asparagine glycosylation sites follow: N98, N117, and N141. Active-site residues include D325 and H328.

Belongs to the 'GDSL' lipolytic enzyme family.

Its subcellular location is the secreted. In Arabidopsis thaliana (Mouse-ear cress), this protein is GDSL esterase/lipase At2g42990.